Consider the following 370-residue polypeptide: MPHQQILMLFGLLPVATNISTWWNFGSMLLACLTLQLLTGFFLAVHYTANINLAFSSIIHITRDVPYGWMMQNLHAIGASMFFICIYIHIARGLYYGSYLNKETWLSGTTLLIMLMATAFFGYVLPWGQMSFWAATVITNLLTAIPYLGSTMTTWLWGGFAINDPTLTRFFALHFILPFGIISLSSLHILLLHEEGSSNPLGTNSDIDKIPFHPYQTYKDMLMLTIMTIMLLTIVSFFPDIFNDPDNFSKANPLVTPQHIKPEWYFLFTYGILRSIPNKLGGALALTMSIMMLLTLPFTHTSKLRSMMFRPLMQLTFWTFTATFLVISWTATKPVEPPFTTISQVAALMYFLFFISNPIMGWLENKIMKL.

4 helical membrane passes run 25-45, 69-90, 105-125, and 170-190; these read FGSM…FLAV, WMMQ…YIHI, WLSG…GYVL, and FFAL…LHIL. The heme b site is built by His75 and His89. Residues His174 and His188 each contribute to the heme b site. His193 contributes to the a ubiquinone binding site. A run of 4 helical transmembrane segments spans residues 218-238, 280-300, 312-332, and 339-358; these read YKDM…VSFF, LGGA…PFTH, LMQL…WTAT, and FTTI…ISNP.

The protein belongs to the cytochrome b family. The cytochrome bc1 complex contains 3 respiratory subunits (MT-CYB, CYC1 and UQCRFS1), 2 core proteins (UQCRC1 and UQCRC2) and probably 6 low-molecular weight proteins. Heme b is required as a cofactor.

Its subcellular location is the mitochondrion inner membrane. Component of the ubiquinol-cytochrome c reductase complex (complex III or cytochrome b-c1 complex) that is part of the mitochondrial respiratory chain. The b-c1 complex mediates electron transfer from ubiquinol to cytochrome c. Contributes to the generation of a proton gradient across the mitochondrial membrane that is then used for ATP synthesis. The polypeptide is Cytochrome b (MT-CYB) (Chilabothrus strigilatus strigilatus (New Providence boa constrictor)).